The primary structure comprises 505 residues: Hexose transporter 1 (505 aa).

Residues 1–27 are Cytoplasmic-facing; it reads MNILRMDILSRGGTQEIEHRDGFFNTS. Residues 28–48 form a helical membrane-spanning segment; the sequence is FQYVLSACLASFIFGYQVSVL. Residues 49-78 lie on the Extracellular side of the membrane; it reads NTIKSYIVVEFEWCSTKTDTSCEDSILKSS. Cysteine 62 and cysteine 70 are joined by a disulfide. The helical transmembrane segment at 79–99 threads the bilayer; it reads FLLASVFIGAVLGSGFSGYLV. Residues 100–104 lie on the Cytoplasmic side of the membrane; it reads KFGRR. Residues 105–125 traverse the membrane as a helical segment; the sequence is FSLMVIYIFFIFVSILTAISH. The Extracellular segment spans residues 126–134; sequence HFHTILYAR. The helical transmembrane segment at 135–155 threads the bilayer; the sequence is LLSGFGIGLITVSVPMYISEM. At 156–165 the chain is on the cytoplasmic side; it reads THKDKKGAYG. A helical membrane pass occupies residues 166-186; the sequence is VLHQLFITFGIFVAVLLGLFL. Glutamine 169 is a binding site for alpha-D-glucose. Glutamine 169 is a binding site for beta-D-glucose. Residues 187–208 are Extracellular-facing; it reads GDGPKINGKSIELSNFEMFWWR. Residues 209 to 229 traverse the membrane as a helical segment; that stretch reads FMFFLPTIISLLGIILLIAFY. The Cytoplasmic segment spans residues 230–294; that stretch reads KEETPYFLYE…SALKIPAYRN (65 aa). Residues 295-315 traverse the membrane as a helical segment; the sequence is VIILGCILSGFQQFTGINVLV. Positions 306, 307, and 312 each coordinate alpha-D-glucose. Glutamine 306 is a beta-D-glucose binding site. Asparagine 312 contributes to the beta-D-glucose binding site. The Extracellular portion of the chain corresponds to 316 to 332; it reads ANSNELYKEFLDKNLIT. A helical transmembrane segment spans residues 333-353; the sequence is ILSVIMTAVNFLMTFPAIYII. Asparagine 342 contacts beta-D-glucose. Residues 354-358 are Cytoplasmic-facing; sequence EKIGR. A helical transmembrane segment spans residues 359 to 379; that stretch reads KTLLLGGCIGVICAFLPTVIA. Over 380 to 393 the chain is Extracellular; sequence RQVWGPTKIVNGLS. A helical membrane pass occupies residues 394–414; sequence IAGTFLMIISFAVSYGPVLWI. Position 413 (tryptophan 413) interacts with alpha-D-glucose. Residues 415–430 lie on the Cytoplasmic side of the membrane; sequence YLHEMYPSEIKDSAAS. Residues 431–451 traverse the membrane as a helical segment; that stretch reads LASLINWVCAIIVVFPSDIII. Over 452–456 the chain is Extracellular; it reads KKSPS. A helical transmembrane segment spans residues 457 to 477; the sequence is ILFMFFSVMCIIAFLFIMFFI. At 478–505 the chain is on the cytoplasmic side; that stretch reads KETKGGEIGTSPYISLEERQKHIGKSKV.

This sequence belongs to the major facilitator superfamily. Sugar transporter (TC 2.A.1.1) family. Homodimer.

It localises to the cell membrane. It carries out the reaction D-glucose(out) = D-glucose(in). The catalysed reaction is D-fructose(out) = D-fructose(in). It catalyses the reaction D-galactose(in) = D-galactose(out). The enzyme catalyses D-mannose(out) = D-mannose(in). It carries out the reaction D-glucosamine(out) = D-glucosamine(in). The catalysed reaction is D-xylose(out) = D-xylose(in). Its activity is regulated as follows. Inhibited by cytochalasin B. In terms of biological role, sodium-independent facilitative hexose transporter. Can transport D-glucose and D-fructose. Can transport D-mannose, D-galactose, D-xylose and D-glucosamine. The protein is Hexose transporter 1 of Plasmodium yoelii yoelii.